We begin with the raw amino-acid sequence, 152 residues long: Large ribosomal subunit protein bL9 (152 aa).

Belongs to the bacterial ribosomal protein bL9 family.

In terms of biological role, binds to the 23S rRNA. The chain is Large ribosomal subunit protein bL9 from Synechococcus sp. (strain CC9605).